A 700-amino-acid polypeptide reads, in one-letter code: Methionine--tRNA ligase (700 aa).

A 'HIGH' region motif is present at residues 13–23 (PYANGDIHLGH). Zn(2+) contacts are provided by C144, C147, C157, and C160. A 'KMSKS' region motif is present at residues 341–345 (KMSKS). K344 serves as a coordination point for ATP. The segment at 562 to 587 (QVGAPTASQDDKAAAKNTSPAAMPSS) is disordered. A compositionally biased stretch (polar residues) spans 577–587 (KNTSPAAMPSS). Residues 598–700 (DFAKVEMKVA…DEAVIGDSLA (103 aa)) enclose the tRNA-binding domain.

It belongs to the class-I aminoacyl-tRNA synthetase family. MetG type 1 subfamily. In terms of assembly, homodimer. Zn(2+) is required as a cofactor.

The protein localises to the cytoplasm. The catalysed reaction is tRNA(Met) + L-methionine + ATP = L-methionyl-tRNA(Met) + AMP + diphosphate. Is required not only for elongation of protein synthesis but also for the initiation of all mRNA translation through initiator tRNA(fMet) aminoacylation. The polypeptide is Methionine--tRNA ligase (Psychrobacter cryohalolentis (strain ATCC BAA-1226 / DSM 17306 / VKM B-2378 / K5)).